We begin with the raw amino-acid sequence, 149 residues long: Lipoprotein signal peptidase (149 aa).

The next 2 helical transmembrane spans lie at Trp-58 to Leu-78 and Ala-85 to Met-105. Residues Asp-111 and Asp-127 contribute to the active site. A helical transmembrane segment spans residues Ile-122 to Phe-142.

It belongs to the peptidase A8 family.

The protein localises to the cell membrane. It carries out the reaction Release of signal peptides from bacterial membrane prolipoproteins. Hydrolyzes -Xaa-Yaa-Zaa-|-(S,diacylglyceryl)Cys-, in which Xaa is hydrophobic (preferably Leu), and Yaa (Ala or Ser) and Zaa (Gly or Ala) have small, neutral side chains.. It functions in the pathway protein modification; lipoprotein biosynthesis (signal peptide cleavage). Functionally, this protein specifically catalyzes the removal of signal peptides from prolipoproteins. The chain is Lipoprotein signal peptidase from Brevibacillus brevis (strain 47 / JCM 6285 / NBRC 100599).